The chain runs to 431 residues: Gamma-glutamyl phosphate reductase (431 aa).

Belongs to the gamma-glutamyl phosphate reductase family.

Its subcellular location is the cytoplasm. The enzyme catalyses L-glutamate 5-semialdehyde + phosphate + NADP(+) = L-glutamyl 5-phosphate + NADPH + H(+). The protein operates within amino-acid biosynthesis; L-proline biosynthesis; L-glutamate 5-semialdehyde from L-glutamate: step 2/2. Catalyzes the NADPH-dependent reduction of L-glutamate 5-phosphate into L-glutamate 5-semialdehyde and phosphate. The product spontaneously undergoes cyclization to form 1-pyrroline-5-carboxylate. In Trichodesmium erythraeum (strain IMS101), this protein is Gamma-glutamyl phosphate reductase.